The following is a 578-amino-acid chain: Vacuolar protein 8 (578 aa).

ARM repeat units lie at residues 58 to 95, 96 to 135, 137 to 176, 178 to 217, 219 to 258, 262 to 301, 303 to 342, 344 to 384, and 428 to 467; these read NRAE…FAEI, TERD…NLAV, ADNK…NLAT, EDNK…NMTH, DDNR…NIAV, NRKR…NLAS, EKYQ…NISI, PLNE…NLAA, and DELK…NLSS.

This sequence belongs to the beta-catenin family.

Its subcellular location is the vacuole membrane. Functions in both vacuole inheritance and protein targeting from the cytoplasm to vacuole. In Aspergillus oryzae (strain ATCC 42149 / RIB 40) (Yellow koji mold), this protein is Vacuolar protein 8 (vac8).